The following is a 932-amino-acid chain: Protocadherin gamma-A8 (932 aa).

Residues 1 to 29 (MAAPQSRPRRGELILLCALLGTLWEIGRG) form the signal peptide. Cadherin domains lie at 30–133 (QIRY…NPKF), 134–242 (QVED…APVF), 243–347 (PHPI…RPEV), 348–452 (IITS…PPTF), 453–562 (PHAS…APEI), and 570–682 (DGST…KPSV). Residues 30 to 692 (QIRYSVPEET…DPNDSSLTLY (663 aa)) lie on the Extracellular side of the membrane. N47 is a glycosylation site (N-linked (GlcNAc...) asparagine). Residues N414, N419, and N545 are each glycosylated (N-linked (GlcNAc...) asparagine). N685 carries N-linked (GlcNAc...) asparagine glycosylation. Residues 693–713 (LVVAVAAISCVFLAFVAVLLG) form a helical membrane-spanning segment. The Cytoplasmic segment spans residues 714 to 932 (LRLRRWHKSH…KKKSGKKEKK (219 aa)). 2 disordered regions span residues 804–841 (ADHG…WPNN) and 902–932 (ATLT…KEKK). Polar residues predominate over residues 810 to 841 (APPNTDWRFSQAQRPGTSGSQNGDDTGTWPNN). Residues 922–932 (NKKKSGKKEKK) show a composition bias toward basic residues.

The protein resides in the cell membrane. Functionally, potential calcium-dependent cell-adhesion protein. May be involved in the establishment and maintenance of specific neuronal connections in the brain. The polypeptide is Protocadherin gamma-A8 (PCDHGA8) (Pan troglodytes (Chimpanzee)).